The following is a 528-amino-acid chain: D-3-phosphoglycerate dehydrogenase (528 aa).

Residues 151-152, Asp171, 230-232, and Asp256 each bind NAD(+); these read RI and AAR. The active site involves Arg232. Glu261 is an active-site residue. The Proton donor role is filled by His279. 279-282 contacts NAD(+); that stretch reads HLGA. In terms of domain architecture, ACT spans 455–527; sequence NLIIHYVDRP…DAYKLEVVDL (73 aa).

This sequence belongs to the D-isomer specific 2-hydroxyacid dehydrogenase family.

The catalysed reaction is (2R)-3-phosphoglycerate + NAD(+) = 3-phosphooxypyruvate + NADH + H(+). It carries out the reaction (R)-2-hydroxyglutarate + NAD(+) = 2-oxoglutarate + NADH + H(+). It participates in amino-acid biosynthesis; L-serine biosynthesis; L-serine from 3-phospho-D-glycerate: step 1/3. In terms of biological role, catalyzes the reversible oxidation of 3-phospho-D-glycerate to 3-phosphonooxypyruvate, the first step of the phosphorylated L-serine biosynthesis pathway. Also catalyzes the reversible oxidation of 2-hydroxyglutarate to 2-oxoglutarate. This chain is D-3-phosphoglycerate dehydrogenase (serA), found in Mycobacterium bovis (strain ATCC BAA-935 / AF2122/97).